Here is a 599-residue protein sequence, read N- to C-terminus: Estrogen receptor (599 aa).

The modulating (transactivation AF-1); mediates interaction with MACROD1 stretch occupies residues 1–188 (MTMTLHTKAS…IMESAKETRY (188 aa)). Serine 10 is a glycosylation site (O-linked (GlcNAc) serine). A required for interaction with NCOA1 region spans residues 35–47 (MERALGEVYVDNS). The interval 35 to 178 (MERALGEVYV…LSSSNEKGNM (144 aa)) is interaction with DDX5; self-association. Threonine 50 carries O-linked (GlcNAc) threonine glycosylation. Phosphoserine; by CDK2 occurs at positions 108 and 110. Serine 122 is modified (phosphoserine). The tract at residues 147-175 (DTGPPAFYRSNSDNRRQNGRERLSSSNEK) is disordered. Residues 158–169 (SDNRRQNGRERL) are compositionally biased toward basic and acidic residues. Serine 171 is modified (phosphoserine; by CK2). 2 consecutive NR C4-type zinc fingers follow at residues 189-209 (CAVC…CEGC) and 225-249 (CPAT…LRKC). Residues 189 to 254 (CAVCNDYASG…RLRKCYEVGM (66 aa)) constitute a DNA-binding region (nuclear receptor). The segment at 189–314 (CAVCNDYASG…TKKNSPALSL (126 aa)) is mediates interaction with DNTTIP2. The hinge stretch occupies residues 255-314 (MKGGIRKDRRGGRMLKHKRQRDDLEGRNEMGASGDMRAANLWPSPLVIKHTKKNSPALSL). Arginine 264 is subject to Asymmetric dimethylarginine; by PRMT1. The tract at residues 266-599 (GRMLKHKRQR…PEAEGFPNTI (334 aa)) is interaction with AKAP13. The tract at residues 268–599 (MLKHKRQRDD…PEAEGFPNTI (332 aa)) is self-association. The region spanning 315-551 (TADQMVSALL…DLLLEMLDAH (237 aa)) is the NR LBD domain. The interval 315–599 (TADQMVSALL…PEAEGFPNTI (285 aa)) is transactivation AF-2. Residues glutamate 357 and arginine 398 each coordinate 17beta-estradiol. The S-palmitoyl cysteine moiety is linked to residue cysteine 451. Histidine 528 is a 17beta-estradiol binding site. A Phosphotyrosine; by Tyr-kinases modification is found at tyrosine 541. The disordered stretch occupies residues 557-581 (ASRMGVPPEEPSQTQLATTSSTSAH). The segment covering 568-581 (SQTQLATTSSTSAH) has biased composition (low complexity). Threonine 575 carries an O-linked (GlcNAc) threonine glycan.

The protein belongs to the nuclear hormone receptor family. NR3 subfamily. Interacts with BCAS3. Binds DNA as a homodimer. Can form a heterodimer with ESR2. Interacts with coactivator NCOA5. Interacts with PELP1, the interaction is enhanced by 17-beta-estradiol; the interaction increases ESR1 transcriptional activity. Interacts with NCOA7; the interaction is ligand-inducible. Interacts with AKAP13, CUEDC2, HEXIM1, KDM5A, MAP1S, SMARD1, and UBE1C. Interacts with MUC1; the interaction is stimulated by 7 beta-estradiol (E2) and enhances ESR1-mediated transcription. Interacts with DNTTIP2, and UIMC1. Interacts with KMT2D/MLL2. Interacts with ATAD2; the interaction is enhanced by estradiol. Interacts with KIF18A and LDB1. Interacts with RLIM (via its C-terminus). Interacts with MACROD1. Interacts with SH2D4A and PLCG. Interacts with SH2D4A; the interaction blocks binding to PLCG and inhibits estrogen-induced cell proliferation. Interacts with DYNLL1. Interacts with CCDC62; the interaction requires estradiol and appears to enhance the transcription of target genes. Interacts with NR2C1; the interaction prevents homodimerization of ESR1 and suppresses its transcriptional activity and cell growth. Interacts with DNAAF4. Interacts with PRMT2. Interacts with RBFOX2. Interacts with EP300; the interaction is estrogen-dependent and enhanced by CITED1. Interacts with CITED1; the interaction is estrogen-dependent. Interacts with FAM120B, FOXL2, PHB2 and SLC30A9. Interacts with coactivators NCOA3 and NCOA6. Interacts with STK3/MST2 only in the presence of SAV1 and vice-versa. Binds to CSNK1D. Interacts with NCOA2; NCOA2 can interact with ESR1 AF-1 and AF-2 domains simultaneously and mediate their transcriptional synergy. Interacts with DDX5. Interacts with NCOA1; the interaction seems to require a self-association of N-terminal and C-terminal regions. Interacts with ZNF366, DDX17, NFKB1, RELA, SP1 and SP3. Interacts with NRIP1. Interacts with GPER1; the interaction occurs in an estrogen-dependent manner. Interacts with CLOCK and the interaction is stimulated by estrogen. Interacts with BCAS3. Interacts with TRIP4 (ufmylated); estrogen dependent. Interacts with LMTK3; the interaction phosphorylates ESR1 (in vitro) and protects it against proteasomal degradation. Interacts with CCAR2 (via N-terminus) in a ligand-independent manner. Interacts with ZFHX3. Interacts with SFR1 in a ligand-dependent and -independent manner. Interacts with DCAF13, LATS1 and DCAF1; regulates ESR1 ubiquitination and ubiquitin-mediated proteasomal degradation. Interacts (via DNA-binding domain) with POU4F2 isoform 2 (C-terminus); this interaction increases the estrogen receptor ESR1 transcriptional activity in a DNA- and ligand 17-beta-estradiol-independent manner. Interacts with ESRRB isoform 1. Interacts with UBE3A and WBP2. Interacts with GTF2B. Interacts with RBM39. In the absence of hormonal ligand, interacts with TACC1. Interacts with PI3KR1 or PI3KR2 and PTK2/FAK1. Interacts with SRC. Interacts with BAG1; the interaction is promoted in the absence of estradiol (17-beta-estradiol/E2). Interacts with and ubiquitinated by STUB1; the interaction is promoted in the absence of estradiol (17-beta-estradiol/E2). Interacts with NEDD8. In terms of processing, phosphorylated by cyclin A/CDK2 and CK1. Phosphorylation probably enhances transcriptional activity. Dephosphorylation at Ser-122 by PPP5C inhibits its transactivation activity. Phosphorylated by LMTK3 (in vitro). Ubiquitinated. Deubiquitinated by OTUB1. Post-translationally, palmitoylated at Cys-451 by ZDHHC7 and ZDHHC21. This modification is required for plasma membrane targeting and for rapid intracellular signaling via ERK and AKT kinases and cAMP generation, but not for signaling mediated by the nuclear hormone receptor. In terms of processing, ubiquitinated; regulated by LATS1 via DCAF1 it leads to ESR1 proteasomal degradation. Deubiquitinated by OTUB1. Ubiquitinated by STUB1/CHIP; in the CA1 hippocampal region following loss of endogenous circulating estradiol (17-beta-estradiol/E2). Ubiquitinated by UBR5, leading to its degradation: UBR5 specifically recognizes and binds ligand-bound ESR1 when it is not associated with coactivators (NCOAs). In presence of NCOAs, the UBR5-degron is not accessible, preventing its ubiquitination and degradation. Dimethylated by PRMT1 at Arg-264. The methylation may favor cytoplasmic localization. Demethylated by JMJD6 at Arg-264.

Its subcellular location is the nucleus. The protein resides in the cytoplasm. The protein localises to the golgi apparatus. It localises to the cell membrane. In terms of biological role, nuclear hormone receptor. The steroid hormones and their receptors are involved in the regulation of eukaryotic gene expression and affect cellular proliferation and differentiation in target tissues. Ligand-dependent nuclear transactivation involves either direct homodimer binding to a palindromic estrogen response element (ERE) sequence or association with other DNA-binding transcription factors, such as AP-1/c-Jun, c-Fos, ATF-2, Sp1 and Sp3, to mediate ERE-independent signaling. Ligand binding induces a conformational change allowing subsequent or combinatorial association with multiprotein coactivator complexes through LXXLL motifs of their respective components. Mutual transrepression occurs between the estrogen receptor (ER) and NF-kappa-B in a cell-type specific manner. Decreases NF-kappa-B DNA-binding activity and inhibits NF-kappa-B-mediated transcription from the IL6 promoter and displace RELA/p65 and associated coregulators from the promoter. Recruited to the NF-kappa-B response element of the CCL2 and IL8 promoters and can displace CREBBP. Present with NF-kappa-B components RELA/p65 and NFKB1/p50 on ERE sequences. Can also act synergistically with NF-kappa-B to activate transcription involving respective recruitment adjacent response elements; the function involves CREBBP. Can activate the transcriptional activity of TFF1. Also mediates membrane-initiated estrogen signaling involving various kinase cascades. Essential for MTA1-mediated transcriptional regulation of BRCA1 and BCAS3. Maintains neuronal survival in response to ischemic reperfusion injury when in the presence of circulating estradiol (17-beta-estradiol/E2). This chain is Estrogen receptor (Esr1), found in Mus musculus (Mouse).